Consider the following 179-residue polypeptide: Ribosome maturation factor RimM (179 aa).

Residues 95–174 form the PRC barrel domain; the sequence is KDEFFYFDIL…QIFCTQDAFL (80 aa).

It belongs to the RimM family. In terms of assembly, binds ribosomal protein uS19.

The protein resides in the cytoplasm. Functionally, an accessory protein needed during the final step in the assembly of 30S ribosomal subunit, possibly for assembly of the head region. Essential for efficient processing of 16S rRNA. May be needed both before and after RbfA during the maturation of 16S rRNA. It has affinity for free ribosomal 30S subunits but not for 70S ribosomes. The chain is Ribosome maturation factor RimM from Campylobacter jejuni subsp. doylei (strain ATCC BAA-1458 / RM4099 / 269.97).